A 120-amino-acid polypeptide reads, in one-letter code: NAD(P)H-quinone oxidoreductase subunit 3, chloroplastic (120 aa).

Helical transmembrane passes span 9–29 (IFWAFLIISSVIPILAFLISG), 64–84 (MFALVFVVFDVETVFLYPWAM), and 88–108 (VLGVSVFIEALIFVLIPIVGS).

The protein belongs to the complex I subunit 3 family. As to quaternary structure, NDH is composed of at least 16 different subunits, 5 of which are encoded in the nucleus.

The protein localises to the plastid. It is found in the chloroplast thylakoid membrane. The catalysed reaction is a plastoquinone + NADH + (n+1) H(+)(in) = a plastoquinol + NAD(+) + n H(+)(out). The enzyme catalyses a plastoquinone + NADPH + (n+1) H(+)(in) = a plastoquinol + NADP(+) + n H(+)(out). NDH shuttles electrons from NAD(P)H:plastoquinone, via FMN and iron-sulfur (Fe-S) centers, to quinones in the photosynthetic chain and possibly in a chloroplast respiratory chain. The immediate electron acceptor for the enzyme in this species is believed to be plastoquinone. Couples the redox reaction to proton translocation, and thus conserves the redox energy in a proton gradient. In Calycanthus floridus var. glaucus (Eastern sweetshrub), this protein is NAD(P)H-quinone oxidoreductase subunit 3, chloroplastic.